The primary structure comprises 348 residues: S-adenosylmethionine:tRNA ribosyltransferase-isomerase (348 aa).

Belongs to the QueA family. Monomer.

It is found in the cytoplasm. The catalysed reaction is 7-aminomethyl-7-carbaguanosine(34) in tRNA + S-adenosyl-L-methionine = epoxyqueuosine(34) in tRNA + adenine + L-methionine + 2 H(+). The protein operates within tRNA modification; tRNA-queuosine biosynthesis. In terms of biological role, transfers and isomerizes the ribose moiety from AdoMet to the 7-aminomethyl group of 7-deazaguanine (preQ1-tRNA) to give epoxyqueuosine (oQ-tRNA). This chain is S-adenosylmethionine:tRNA ribosyltransferase-isomerase, found in Amoebophilus asiaticus (strain 5a2).